Reading from the N-terminus, the 152-residue chain is UPF0735 ACT domain-containing protein SAS1579 (152 aa).

In terms of domain architecture, ACT spans 75–150 (TLILYVTDIV…YVSKVELISM (76 aa)).

This sequence belongs to the UPF0735 family.

The sequence is that of UPF0735 ACT domain-containing protein SAS1579 from Staphylococcus aureus (strain MSSA476).